A 312-amino-acid chain; its full sequence is MDIIFYHPTFDTQWWIEALHKAIPQTRVRAWKSGDNESADYALVWHPPVEMLAGRDLKAVFALGAGVDSILSKLQAHPEMLKPSVPLFRLEDTGMGEQMQEYAVSQVLHWFRRFDDYRIQQNSSHWQPLPEYHREDFTIGILGAGVLGSKVAQSLQTWRFPLRCWSRTRKSWPGVQSFAGREELSAFLSQCRVLINLLPNTPETVGIINQQLLEKLPDGAYLLNLARGVHVVEDDLLAALDSGKVKGAMLDVFNREPLPPESPLWQHPRVTITPHVAAITRPAEAVDYISRTIAQVEKGERVCGQVDRARGY.

The active site involves R227. H275 (proton donor) is an active-site residue.

It belongs to the D-isomer specific 2-hydroxyacid dehydrogenase family. GhrA subfamily.

Its subcellular location is the cytoplasm. The enzyme catalyses glycolate + NADP(+) = glyoxylate + NADPH + H(+). It catalyses the reaction (R)-glycerate + NAD(+) = 3-hydroxypyruvate + NADH + H(+). It carries out the reaction (R)-glycerate + NADP(+) = 3-hydroxypyruvate + NADPH + H(+). In terms of biological role, catalyzes the NADPH-dependent reduction of glyoxylate and hydroxypyruvate into glycolate and glycerate, respectively. This is Glyoxylate/hydroxypyruvate reductase A from Escherichia coli O6:K15:H31 (strain 536 / UPEC).